The primary structure comprises 96 residues: RNA-binding protein Hfq (96 aa).

Positions 9–68 (DPFLNALRRERVPVSIYLVNGIKLQGQIESFDQFVILLKNTVSQMVYKHAISTVVPSRPV) constitute a Sm domain. The segment at 64–96 (PSRPVSHHSNTGTNQAGTNYSGGNATQQDDVAE) is disordered. A compositionally biased stretch (polar residues) spans 70–96 (HHSNTGTNQAGTNYSGGNATQQDDVAE).

Belongs to the Hfq family. Homohexamer.

Its function is as follows. RNA chaperone that binds small regulatory RNA (sRNAs) and mRNAs to facilitate mRNA translational regulation in response to envelope stress, environmental stress and changes in metabolite concentrations. Also binds with high specificity to tRNAs. This chain is RNA-binding protein Hfq, found in Proteus mirabilis (strain HI4320).